A 151-amino-acid polypeptide reads, in one-letter code: Ribosome maturation factor RimP (151 aa).

Belongs to the RimP family.

It localises to the cytoplasm. In terms of biological role, required for maturation of 30S ribosomal subunits. In Thermoanaerobacter pseudethanolicus (strain ATCC 33223 / 39E) (Clostridium thermohydrosulfuricum), this protein is Ribosome maturation factor RimP.